A 235-amino-acid chain; its full sequence is MSKRSKAYRAAAEKVDRDNLYTPLQAAKLAKETSSTKQDATVEVAIRLGVDPRKADQMVRGTVNLPHGTGKTARVAVFAVGEKAEQAQAAGADIVGSDDLIEKIQGGFLDFDAAIATPDQMAKVGRIARVLGPRGLMPNPKTGTVTPDVAKAVADIKGGKINFRVDKQANLHFVIGKASFDEKALAENYGAALDEVLRLKPSASKGRYLKKITVSTTTGPGIPVDPSITRNFAEA.

Belongs to the universal ribosomal protein uL1 family. As to quaternary structure, part of the 50S ribosomal subunit.

In terms of biological role, binds directly to 23S rRNA. The L1 stalk is quite mobile in the ribosome, and is involved in E site tRNA release. Its function is as follows. Protein L1 is also a translational repressor protein, it controls the translation of the L11 operon by binding to its mRNA. This chain is Large ribosomal subunit protein uL1, found in Mycolicibacterium paratuberculosis (strain ATCC BAA-968 / K-10) (Mycobacterium paratuberculosis).